The following is a 176-amino-acid chain: Secreted LysM effector ELP2 (176 aa).

A signal peptide spans 1 to 18 (MQFSIFTVLAAAASFAVA). Positions 31–45 (TSAAANPSPTTSGAA) are enriched in low complexity. Residues 31–50 (TSAAANPSPTTSGAANPSPT) form a disordered region. In terms of domain architecture, LysM 1 spans 58-102 (HKTTVKAGQTLTTIAERFHSGICDIAWQNKLENPNVIFVGQVLLV). A glycan (N-linked (GlcNAc...) asparagine) is linked at asparagine 111. Positions 129 to 173 (ATYTIKSGDTFFAVAQSLGITTDSLTGANPGVVPENLQIDQVINV) constitute a LysM 2 domain.

The protein belongs to the secreted LysM effector family. As to quaternary structure, forms homodimers in a chitin-independent manner through interactions at the N-termini of EPL2 monomers. Homodimers are further polymerized in a chitin-dependent manner.

It is found in the secreted. In terms of biological role, secreted effector that enables the plant pathogenic fungus to manipulate host defenses for successful infection. Binds chitin oligomers and polymer with high affinity and plays a dual role, not only in the suppression of chitin-triggered immune responses, but also in appressorium function. Does not protect fungal hyphae against plant chitinases but suppresses chitin-triggered plant immune responses. Chitin-induced polymerization of homodimers forms a contiguous ELP2 highly oligomeric super-complexe that may precipitate at infection sites to eliminate chitin oligomers, and thus suppress the activation of chitin-induced plant immunity. This is Secreted LysM effector ELP2 from Colletotrichum higginsianum (strain IMI 349063) (Crucifer anthracnose fungus).